A 310-amino-acid polypeptide reads, in one-letter code: Cytochrome f (310 aa).

Residues 1-23 (MRRLIPILLGSLVLSLSILVAPA) form the signal peptide. Residues Tyr28, Cys48, Cys51, and His52 each coordinate heme. The chain crosses the membrane as a helical span at residues 277–297 (IYGLLAFFVAVSLAQILLVLK).

The protein belongs to the cytochrome f family. In terms of assembly, the 4 large subunits of the cytochrome b6-f complex are cytochrome b6, subunit IV (17 kDa polypeptide, PetD), cytochrome f and the Rieske protein, while the 4 small subunits are PetG, PetL, PetM and PetN. The complex functions as a dimer. Requires heme as cofactor.

Its subcellular location is the cellular thylakoid membrane. Component of the cytochrome b6-f complex, which mediates electron transfer between photosystem II (PSII) and photosystem I (PSI), cyclic electron flow around PSI, and state transitions. The chain is Cytochrome f from Prochlorococcus marinus (strain MIT 9303).